Here is a 188-residue protein sequence, read N- to C-terminus: Elongation factor P (188 aa).

This sequence belongs to the elongation factor P family.

The protein localises to the cytoplasm. Its pathway is protein biosynthesis; polypeptide chain elongation. Involved in peptide bond synthesis. Stimulates efficient translation and peptide-bond synthesis on native or reconstituted 70S ribosomes in vitro. Probably functions indirectly by altering the affinity of the ribosome for aminoacyl-tRNA, thus increasing their reactivity as acceptors for peptidyl transferase. The sequence is that of Elongation factor P from Aeromonas salmonicida (strain A449).